The following is a 351-amino-acid chain: DNA nickase (351 aa).

3 residues coordinate Fe cation: His-241, Glu-245, and His-303.

Acts as a DNA nickase. The protein is DNA nickase of Nostoc sp. (strain PCC 7120 / SAG 25.82 / UTEX 2576).